The primary structure comprises 259 residues: Apolipoprotein A-I (259 aa).

A signal peptide spans 1–18; sequence MKAAVLAVALVFLTGCQA. Tandem repeats lie at residues 67–88 and 89–110. The 10 X approximate tandem repeats stretch occupies residues 67–259; it reads LNLLDNWDTL…IDEAKKKLNA (193 aa). The residue at position 109 (M109) is a Methionine sulfoxide. One copy of the 3; half-length repeat lies at 111 to 121; it reads KDLENVKQKMQ. The stretch at 122–143 is repeat 4; the sequence is PHLDEFQEKWNEEVEAYRQKLE. One copy of the 5; truncated repeat lies at 144 to 161; sequence PLGTELHKNAKEMQRHLK. Copy 6 of the repeat occupies 162–183; sequence VVAEEFRDRMRVNADALRAKFG. The stretch at 184–203 is one 7; truncated repeat; it reads LYSDQMRENLAQRLTEIKNH. M189 is modified (methionine sulfoxide). Repeat unit 8 spans residues 204 to 225; that stretch reads PTLIEYHTKASDHLKTLGEKAK. The stretch at 226–236 is one 9; half-length repeat; that stretch reads PALDDLGQGLM. M236 carries the post-translational modification Methionine sulfoxide. Repeat unit 10 spans residues 237–259; sequence PVLEAWKAKIMSMIDEAKKKLNA.

It belongs to the apolipoprotein A1/A4/E family. In terms of assembly, homodimer. Interacts with APOA1BP and CLU. Component of a sperm activating protein complex (SPAP), consisting of APOA1, an immunoglobulin heavy chain, an immunoglobulin light chain and albumin. Interacts with NDRG1. Interacts with SCGB3A2. Interacts with NAXE and YJEFN3. In terms of processing, glycosylated. Palmitoylated. Post-translationally, phosphorylation sites are present in the extracellular medium. Major protein of plasma HDL, also found in chylomicrons.

It is found in the secreted. Participates in the reverse transport of cholesterol from tissues to the liver for excretion by promoting cholesterol efflux from tissues and by acting as a cofactor for the lecithin cholesterol acyltransferase (LCAT). As part of the SPAP complex, activates spermatozoa motility. The sequence is that of Apolipoprotein A-I (Apoa1) from Rattus norvegicus (Rat).